A 158-amino-acid chain; its full sequence is Transcription elongation factor GreA (158 aa).

A coiled-coil region spans residues 45-72; the sequence is AEYHAAREQQSFIEGRIKQLEGELSHAE.

It belongs to the GreA/GreB family.

Its function is as follows. Necessary for efficient RNA polymerase transcription elongation past template-encoded arresting sites. The arresting sites in DNA have the property of trapping a certain fraction of elongating RNA polymerases that pass through, resulting in locked ternary complexes. Cleavage of the nascent transcript by cleavage factors such as GreA or GreB allows the resumption of elongation from the new 3'terminus. GreA releases sequences of 2 to 3 nucleotides. This is Transcription elongation factor GreA from Xylella fastidiosa (strain M12).